Consider the following 305-residue polypeptide: MAGAVPQFMVDEYVLAYHGPLLYEARVILAEVWDESNTLLGTVGPHYFIHYKGWKQTWDEWVPESRLLKLNEAGFAKRRALLDAQAKKGRSTGGSGGTGSPGAGKGGLKDKKKDTKKRGRDAMESESDFMKRPEVKIVIPDVLKLVLVDDWENVTKNNQLVALPRKPNVRELLEEYRQYASASKKQERSDRATALLSEIISGITLYFDKALGNNLLYRFERAQYVEQKRQNPEKPMSEIYGAEHLLRLFVNFGPFIAYTNIDTESLNILRDYINDIMQWMIKEQKRLFMKEYEETTTHYQNLSRS.

The Tudor-knot domain occupies 14-67; sequence VLAYHGPLLYEARVILAEVWDESNTLLGTVGPHYFIHYKGWKQTWDEWVPESRL. The segment at 86–127 is disordered; it reads AKKGRSTGGSGGTGSPGAGKGGLKDKKKDTKKRGRDAMESES. Residues 91-106 show a composition bias toward gly residues; it reads STGGSGGTGSPGAGKG. The 174-residue stretch at 131 to 304 folds into the MRG domain; that stretch reads KRPEVKIVIP…TTTHYQNLSR (174 aa).

This sequence belongs to the MRG family. Component of the NuA4 histone acetyltransferase complex.

The protein localises to the nucleus. Functionally, involved in deacetylation of histones, chromatin assembly and chromosome segregation. May act as a transcriptional oscillator, directing histone deacetylases to specific chromosomal domains. Component of the NuA4 histone acetyltransferase complex which is involved in transcriptional activation of selected genes principally by acetylation of nucleosomal histone H4 and H2A. The NuA4 complex is also involved in DNA repair. This is Chromatin modification-related protein EAF3 (EAF3) from Cryptococcus neoformans var. neoformans serotype D (strain B-3501A) (Filobasidiella neoformans).